A 376-amino-acid polypeptide reads, in one-letter code: uncharacterized protein (376 aa).

The protein belongs to the YCR102c/YLR460c/YNL134c family.

This is an uncharacterized protein from Saccharomyces cerevisiae (strain ATCC 204508 / S288c) (Baker's yeast).